Reading from the N-terminus, the 145-residue chain is uncharacterized protein (145 aa).

Residues 1–29 (MHLIRAAGAVCLAVVLIAGCRFNEDQHQA) form the signal peptide. The stretch at 67-101 (KNGTQEKAEIQDKLSGVNQEGEEALDEMKMILSEL) forms a coiled coil.

This is an uncharacterized protein from Bacillus subtilis (strain 168).